Reading from the N-terminus, the 257-residue chain is Imidazole glycerol phosphate synthase subunit HisF (257 aa).

Residues D11 and D130 contribute to the active site.

This sequence belongs to the HisA/HisF family. In terms of assembly, heterodimer of HisH and HisF.

Its subcellular location is the cytoplasm. It carries out the reaction 5-[(5-phospho-1-deoxy-D-ribulos-1-ylimino)methylamino]-1-(5-phospho-beta-D-ribosyl)imidazole-4-carboxamide + L-glutamine = D-erythro-1-(imidazol-4-yl)glycerol 3-phosphate + 5-amino-1-(5-phospho-beta-D-ribosyl)imidazole-4-carboxamide + L-glutamate + H(+). It functions in the pathway amino-acid biosynthesis; L-histidine biosynthesis; L-histidine from 5-phospho-alpha-D-ribose 1-diphosphate: step 5/9. IGPS catalyzes the conversion of PRFAR and glutamine to IGP, AICAR and glutamate. The HisF subunit catalyzes the cyclization activity that produces IGP and AICAR from PRFAR using the ammonia provided by the HisH subunit. This is Imidazole glycerol phosphate synthase subunit HisF from Vibrio parahaemolyticus serotype O3:K6 (strain RIMD 2210633).